We begin with the raw amino-acid sequence, 183 residues long: Somatotropin (183 aa).

Histidine 19 provides a ligand contact to Zn(2+). The disordered stretch occupies residues 38–67 (EEQRHSHKSSPSAFCQSETIPAPTGKEDAQ). Residues 46–56 (SSPSAFCQSET) are compositionally biased toward polar residues. The cysteines at positions 52 and 156 are disulfide-linked. Zn(2+) is bound at residue glutamate 165. A disulfide bridge connects residues cysteine 173 and cysteine 181.

The protein belongs to the somatotropin/prolactin family.

It localises to the secreted. Growth hormone plays an important role in growth control and is involved in the regulation of several anabolic processes. Implicated as an osmoregulatory substance important for seawater adaptation. This chain is Somatotropin (gh), found in Prionace glauca (Blue shark).